Here is a 205-residue protein sequence, read N- to C-terminus: Urease accessory protein UreG (205 aa).

14–21 (GPVGSGKT) serves as a coordination point for GTP.

The protein belongs to the SIMIBI class G3E GTPase family. UreG subfamily. In terms of assembly, homodimer. UreD, UreF and UreG form a complex that acts as a GTP-hydrolysis-dependent molecular chaperone, activating the urease apoprotein by helping to assemble the nickel containing metallocenter of UreC. The UreE protein probably delivers the nickel.

The protein localises to the cytoplasm. Its function is as follows. Facilitates the functional incorporation of the urease nickel metallocenter. This process requires GTP hydrolysis, probably effectuated by UreG. The polypeptide is Urease accessory protein UreG (Citrobacter koseri (strain ATCC BAA-895 / CDC 4225-83 / SGSC4696)).